Here is a 592-residue protein sequence, read N- to C-terminus: Bifunctional dolabella-3,7-dien-18-ol synthase/dolathalia-3,7,11-triene synthase TPS20, chloroplastic (592 aa).

A chloroplast-targeting transit peptide spans 1–52 (MEAITKNGSLSQTLVHCGPKSLSSFIPVRCLRFSKNPFPKKLVVTRARTSIN). Asp349, Asp353, Asp491, Thr495, and Glu499 together coordinate Mg(2+). A DDXXD motif motif is present at residues 349-353 (DDLYD).

Belongs to the terpene synthase family. Tpsa subfamily. Mg(2+) is required as a cofactor. Requires Mn(2+) as cofactor.

It is found in the plastid. The protein resides in the chloroplast. It carries out the reaction (2E,6E,10E)-geranylgeranyl diphosphate + H2O = (3E,7E)-dolabella-3,7-dien-18-ol + diphosphate. It catalyses the reaction (2E,6E,10E)-geranylgeranyl diphosphate = (3E,7E)-dolathalia-3,7,11-triene + diphosphate. It functions in the pathway secondary metabolite biosynthesis; terpenoid biosynthesis. Involved in the biosynthesis of diterpenes in roots. Possesses dolabella-3,7-dien-18-ol synthase activity and dolathalia-3,7,11-triene synthase activity in vitro. Catalyzes the formation of dolabella-3,7-dien-18-ol and dolathalia-3,7,11-triene from geranygeranyl diphosphate (GGPP). Does not seem to be involved in sesquiterpene biosynthesis. This chain is Bifunctional dolabella-3,7-dien-18-ol synthase/dolathalia-3,7,11-triene synthase TPS20, chloroplastic, found in Arabidopsis thaliana (Mouse-ear cress).